We begin with the raw amino-acid sequence, 422 residues long: Dihydroorotase (422 aa).

Zn(2+) is bound by residues H57 and H59. Substrate-binding positions include 59–61 and N91; that span reads HLR. Zn(2+)-binding residues include D149, H176, and H229. N275 lines the substrate pocket. D302 is a Zn(2+) binding site. D302 is an active-site residue. Residues H306 and 320–321 each bind substrate; that span reads FG.

It belongs to the metallo-dependent hydrolases superfamily. DHOase family. Class I DHOase subfamily. Requires Zn(2+) as cofactor.

The enzyme catalyses (S)-dihydroorotate + H2O = N-carbamoyl-L-aspartate + H(+). Its pathway is pyrimidine metabolism; UMP biosynthesis via de novo pathway; (S)-dihydroorotate from bicarbonate: step 3/3. Catalyzes the reversible cyclization of carbamoyl aspartate to dihydroorotate. The polypeptide is Dihydroorotase (Endomicrobium trichonymphae).